Here is a 256-residue protein sequence, read N- to C-terminus: tRNA (guanine-N(7)-)-methyltransferase (256 aa).

S-adenosyl-L-methionine contacts are provided by Glu85, Glu110, Asp137, and Asp159. Asp159 is an active-site residue. The substrate site is built by Lys163 and Asp195.

This sequence belongs to the class I-like SAM-binding methyltransferase superfamily. TrmB family.

The enzyme catalyses guanosine(46) in tRNA + S-adenosyl-L-methionine = N(7)-methylguanosine(46) in tRNA + S-adenosyl-L-homocysteine. Its pathway is tRNA modification; N(7)-methylguanine-tRNA biosynthesis. Functionally, catalyzes the formation of N(7)-methylguanine at position 46 (m7G46) in tRNA. This chain is tRNA (guanine-N(7)-)-methyltransferase, found in Rhodopseudomonas palustris (strain BisB5).